A 349-amino-acid polypeptide reads, in one-letter code: Rhodopsin (349 aa).

Residues 1–33 lie on the Extracellular side of the membrane; that stretch reads TEGPYFYIPMSNATGVVRSPYEYPQYYLVYPAA. A glycan (N-linked (GlcNAc...) asparagine) is linked at N12. The chain crosses the membrane as a helical span at residues 34-58; the sequence is FAVLGAYMFFLIIFGFPVNFLTLYV. Topologically, residues 59–70 are cytoplasmic; the sequence is TIEHKKLRTPLN. A helical transmembrane segment spans residues 71 to 93; that stretch reads YILLNLAVADLFMVIGGFTTTIY. At 94–107 the chain is on the extracellular side; sequence TSMHGYFVLGRLGC. Residues C107 and C184 are joined by a disulfide bond. Residues 108 to 130 traverse the membrane as a helical segment; it reads NLEGFSATLGGMISLWSLVVLAV. Residues 131–133 carry the 'Ionic lock' involved in activated form stabilization motif; sequence ERW. The Cytoplasmic segment spans residues 131-149; it reads ERWVVVCKPMSNFRFGENH. A helical membrane pass occupies residues 150–170; that stretch reads AIMGVTLTWAMGLACTVPPLV. Residues 171-199 are Extracellular-facing; it reads GWSRYIPEGMQCSCGIDYYTRAEGFNNES. N197 carries an N-linked (GlcNAc...) asparagine glycan. Residues 200–221 form a helical membrane-spanning segment; sequence FVLYMFVCHFSFPLVVIFFCYG. Topologically, residues 222–249 are cytoplasmic; that stretch reads RLLCAVKEAAAAQQESETTQRAEREVTR. Residues 250 to 271 traverse the membrane as a helical segment; that stretch reads MVILMVIGFLVCWLPYASVAWY. Residues 272–283 are Extracellular-facing; it reads IFTHQGSEFGPL. A helical transmembrane segment spans residues 284–305; the sequence is FMTIPAFFAKSSAIYNPVIYIC. Position 293 is an N6-(retinylidene)lysine (K293). At 306–349 the chain is on the cytoplasmic side; that stretch reads LNKQFRQCMLTTLFCGKNPFEEEEGASSTKTEASSASSSSVSPA. Residue C320 is the site of S-palmitoyl cysteine attachment. A disordered region spans residues 326 to 349; the sequence is EEEEGASSTKTEASSASSSSVSPA. Residues 331-349 are compositionally biased toward low complexity; sequence ASSTKTEASSASSSSVSPA.

The protein belongs to the G-protein coupled receptor 1 family. Opsin subfamily. Post-translationally, phosphorylated on some or all of the serine and threonine residues present in the C-terminal region. Contains one covalently linked retinal chromophore.

The protein localises to the membrane. It localises to the cell projection. Its subcellular location is the cilium. It is found in the photoreceptor outer segment. In terms of biological role, photoreceptor required for image-forming vision at low light intensity. While most salt water fish species use retinal as chromophore, most freshwater fish use 3-dehydroretinal, or a mixture of retinal and 3-dehydroretinal. Light-induced isomerization of 11-cis to all-trans retinal triggers a conformational change that activates signaling via G-proteins. Subsequent receptor phosphorylation mediates displacement of the bound G-protein alpha subunit by arrestin and terminates signaling. The protein is Rhodopsin (rho) of Myripristis berndti (Bigscale soldierfish).